Consider the following 376-residue polypeptide: TraB domain-containing protein (376 aa).

Met-1 bears the N-acetylmethionine mark. Phosphothreonine is present on Thr-64.

This is TraB domain-containing protein (Trabd) from Mus musculus (Mouse).